Reading from the N-terminus, the 174-residue chain is Sarcoplasmic calcium-binding protein (174 aa).

Ser1 carries the post-translational modification N-acetylserine. EF-hand domains lie at Leu3–Glu38, Gly55–Ser90, Val91–Asp126, and Lys127–Asn160. Residues Asp16, Asp18, Asp20, and Asp27 each coordinate Ca(2+). 9 residues coordinate Ca(2+): Asp104, Asn106, Asp108, Asn110, Glu115, Asp138, Asn140, Asp142, and Glu149.

Like parvalbumins, SCPs seem to be more abundant in fast contracting muscles, but no functional relationship can be established from this distribution. This is Sarcoplasmic calcium-binding protein from Hediste diversicolor (Sandworm).